We begin with the raw amino-acid sequence, 552 residues long: Arginine--tRNA ligase (552 aa).

The 'HIGH' region motif lies at 123–133 (ANPTGPLTIGR).

This sequence belongs to the class-I aminoacyl-tRNA synthetase family. In terms of assembly, monomer.

It is found in the cytoplasm. It catalyses the reaction tRNA(Arg) + L-arginine + ATP = L-arginyl-tRNA(Arg) + AMP + diphosphate. The chain is Arginine--tRNA ligase from Pelodictyon phaeoclathratiforme (strain DSM 5477 / BU-1).